The following is a 509-amino-acid chain: MRDLVLVVDFGGQYNQLIARRVRECGVYCEIIPYTYSIEKIKEKNPKGIIFTGGPNSVYGENTPTLDKEIFNLNVPVLGICYGDQLMAHLLGGKVDTAPVREYGKTNVTLDNSSKLFAGIEADETCWMSHTDYIAEAPEGFKIIAHTDVCPVAAMENEERRLYGVQFHPEVEHTPFGQNMMRNFLYNICGLENSWSMASFAEEKIAEIKKIVGDKKLICALSGGVDSSVAAVMVHKAVGKQLTCIFVDHGLLRKDEGDQVEKIFKEGFDMNLIRVNAQDRFLGKLKGVSDPETKRKIIGEEFIRVFEEEAGKLGDIKFLVQGTIYPDVVESGTDTSAVIKSHHNVGGLPEDMEFSLIEPLRELFKDEVRAVGEELGIPHHLVWRQPFPGPGLAIRVLGEVTEDKLEVVREADAIFREEIALAGLESEIWQYFAVLPNIQSVGVMGDERTYCHTVGLRAVTSSDGMTSNWAHIPYEVIDKVSRRIVNEVKGVNRIVYDVTSKPPATIEWE.

A Glutamine amidotransferase type-1 domain is found at 4–194 (LVLVVDFGGQ…LYNICGLENS (191 aa)). Residue Cys-81 is the Nucleophile of the active site. Catalysis depends on residues His-168 and Glu-170. The 190-residue stretch at 195-384 (WSMASFAEEK…LGIPHHLVWR (190 aa)) folds into the GMPS ATP-PPase domain. 222 to 228 (SGGVDSS) provides a ligand contact to ATP.

In terms of assembly, homodimer.

It catalyses the reaction XMP + L-glutamine + ATP + H2O = GMP + L-glutamate + AMP + diphosphate + 2 H(+). The protein operates within purine metabolism; GMP biosynthesis; GMP from XMP (L-Gln route): step 1/1. Catalyzes the synthesis of GMP from XMP. In Clostridium perfringens (strain 13 / Type A), this protein is GMP synthase [glutamine-hydrolyzing].